We begin with the raw amino-acid sequence, 144 residues long: Large ribosomal subunit protein uL16 (144 aa).

It belongs to the universal ribosomal protein uL16 family. Part of the 50S ribosomal subunit.

Functionally, binds 23S rRNA and is also seen to make contacts with the A and possibly P site tRNAs. The chain is Large ribosomal subunit protein uL16 from Lysinibacillus sphaericus (strain C3-41).